The following is a 527-amino-acid chain: Type-2 serine--tRNA ligase (527 aa).

A317 serves as a coordination point for L-serine. C319 provides a ligand contact to Zn(2+). R349 provides a ligand contact to L-serine. ATP-binding positions include 349-351 (RWE) and 360-361 (RV). L-serine is bound at residue 366–368 (RIE). E368 and C478 together coordinate Zn(2+). An ATP-binding site is contributed by R485.

This sequence belongs to the class-II aminoacyl-tRNA synthetase family. Type-2 seryl-tRNA synthetase subfamily. Homodimer. Zn(2+) serves as cofactor.

The protein localises to the cytoplasm. It catalyses the reaction tRNA(Ser) + L-serine + ATP = L-seryl-tRNA(Ser) + AMP + diphosphate + H(+). The catalysed reaction is tRNA(Sec) + L-serine + ATP = L-seryl-tRNA(Sec) + AMP + diphosphate + H(+). It functions in the pathway aminoacyl-tRNA biosynthesis; selenocysteinyl-tRNA(Sec) biosynthesis; L-seryl-tRNA(Sec) from L-serine and tRNA(Sec): step 1/1. Its function is as follows. Catalyzes the attachment of serine to tRNA(Ser). Is also able to aminoacylate tRNA(Sec) with serine, to form the misacylated tRNA L-seryl-tRNA(Sec), which will be further converted into selenocysteinyl-tRNA(Sec). The chain is Type-2 serine--tRNA ligase from Methanopyrus kandleri (strain AV19 / DSM 6324 / JCM 9639 / NBRC 100938).